Reading from the N-terminus, the 217-residue chain is MVYKIAIDGPAGSGKSTTACLLRKRLGYKTINSGSIYRAVAYVLDSTFKNADLESKNIRDFVNLLDFDMFKDEILYNNHNISNYLRSKRIDEYVSLVAKKLYIRKKVGNLQNKFIKCSDTGIIIEGRDIGTNVLPDATLKIYLDASPKVRAKRRFLERPDISYEDTLAGIIERDYSDKTREHGALVVAEGAIIINTDDMSTEEVVDKIFDLFQNKIN.

ATP is bound at residue glycine 9 to threonine 17.

It belongs to the cytidylate kinase family. Type 1 subfamily.

The enzyme catalyses CMP + ATP = CDP + ADP. The catalysed reaction is dCMP + ATP = dCDP + ADP. In Vairimorpha ceranae (strain BRL01) (Microsporidian parasite), this protein is Probable cytidylate kinase.